A 487-amino-acid chain; its full sequence is uncharacterized protein (487 aa).

3 disordered regions span residues 35-153 (VSRK…SGDQ), 237-345 (NTTK…AKAL), and 358-395 (QKRK…SSAA). Residues 54–96 (FDQEDILDTVPEQTDENEDEAGDDELESEKEELDYDEEEDDED) show a composition bias toward acidic residues. Basic and acidic residues predominate over residues 97 to 132 (RRERTSRYTSEKKGSRKDSVEGDENKKENGQDETKR). Positions 241 to 253 (SKSRGRDTRKRRS) are enriched in basic residues. Low complexity predominate over residues 254-264 (SSYSSTSSSSD). 2 stretches are compositionally biased toward basic and acidic residues: residues 273–338 (SRSD…KHSA) and 358–383 (QKRK…KKEV). Low complexity predominate over residues 385-395 (TTVSTNTSSAA).

This is an uncharacterized protein from Caenorhabditis elegans.